Here is a 138-residue protein sequence, read N- to C-terminus: MATQTLNLDVVSAEDKLFSGVVQTVQVTGSEGELGIYPGHAPLLTKIKPGMVRYVSEAGDEELLYVAGGVLEVQPGHVIVLADVAVRGDELDLQEAEAAKKRAEEAIADSGSDVTYAEAIAELSRALAQIDIIRKLKR.

Belongs to the ATPase epsilon chain family. F-type ATPases have 2 components, CF(1) - the catalytic core - and CF(0) - the membrane proton channel. CF(1) has five subunits: alpha(3), beta(3), gamma(1), delta(1), epsilon(1). CF(0) has three main subunits: a, b and c.

It is found in the cell inner membrane. Functionally, produces ATP from ADP in the presence of a proton gradient across the membrane. The protein is ATP synthase epsilon chain of Idiomarina loihiensis (strain ATCC BAA-735 / DSM 15497 / L2-TR).